Consider the following 383-residue polypeptide: MAFVHIRCLCFILLCTITGYSLEIKVNPPQDFEILDPGLLGYLYLQWKPPVVIEKFKGCTLEYELKYRNVDSDSWKTIITRNLIYKDGFDLNKGIEGKIRTHLSEHCTNGSEVQSPWIEASYGISDEGSLETKIQDMKCIYYNWQYLVCSWKPGKTVYSDTNYTMFFWYEGLDHALQCADYLQHDEKNVGCKLSNLDSSDYKDFFICVNGSSKLEPIRSSYTVFQLQNIVKPLPPEFLHISVENSIDIRMKWSTPGGPIPPRCYTYEIVIREDDISWESATDKNDMKLKRRANESEDLCFFVRCKVNIYCADDGIWSEWSEEECWEGYTGPDSKIIFIVPVCLFFIFLLLLLCLIVEKEEPEPTLSLHVDLNKEVCAYEDTLC.

A signal peptide spans 1 to 21 (MAFVHIRCLCFILLCTITGYS). At 22 to 334 (LEIKVNPPQD…WEGYTGPDSK (313 aa)) the chain is on the extracellular side. Fibronectin type-III domains follow at residues 28–128 (PPQD…SDEG), 131–219 (ETKI…PIRS), and 234–332 (PPEF…TGPD). The cysteines at positions 59 and 107 are disulfide-linked. The N-linked (GlcNAc...) asparagine glycan is linked to Asn109. Cys139 and Cys149 form a disulfide bridge. Asn162 is a glycosylation site (N-linked (GlcNAc...) asparagine). A disulfide bridge links Cys178 with Cys191. N-linked (GlcNAc...) asparagine glycans are attached at residues Asn209 and Asn293. A disulfide bridge connects residues Cys263 and Cys310. The short motif at 316–320 (WSEWS) is the WSXWS motif element. A helical membrane pass occupies residues 335–355 (IIFIVPVCLFFIFLLLLLCLI). Over 356–383 (VEKEEPEPTLSLHVDLNKEVCAYEDTLC) the chain is Cytoplasmic.

The protein belongs to the type I cytokine receptor family. Type 5 subfamily. Interacts with IL4RA. Interacts with high affinity to interleukin-13 (IL13), but not to interleukin-4 (IL4). In terms of processing, cleaved by MMP8 leading to a soluble form that is also able to interact with IL13.

The protein localises to the cell membrane. The protein resides in the secreted. Cell surface receptor that plays a role in the regulation of IL-13-mediated responses. Functions as a decoy receptor that inhibits IL-13- and IL-4-mediated signal transduction via the JAK-STAT pathway and thereby modulates immune responses and inflammation. Serves as a functional signaling receptor for IL-13 in an alternative pathway involving AP-1 ultimately leading to the production of TGFB1. This is Interleukin-13 receptor subunit alpha-2 (Il13ra2) from Mus musculus (Mouse).